We begin with the raw amino-acid sequence, 198 residues long: Ras-related protein Rab-34, isoform NARR (198 aa).

A run of 13 repeats spans residues 7 to 15 (PRDDVGSPR), 16 to 24 (PRVIVGTIR), 25 to 33 (PRVIVGTIR), 34 to 42 (PRVIVGSAR), 43 to 51 (ARPPPDGTP), 52 to 60 (RPQLAAEES), 61 to 69 (PRPRVIFGT), 70 to 78 (PRARVILGS), 79 to 87 (PRPRVIVSS), 88 to 96 (PWPAVVVAS), 97 to 105 (PRPRTPVGS), 106 to 114 (PWPRVVVGT), and 115 to 123 (PRPRVIVGS). A 13 x 9 AA approximate tandem-repeats of P-R-V-I-V-G-(S/T)-P-R region spans residues 7–125 (PRDDVGSPRP…RPRVIVGSPR (119 aa)). Ser-13 is subject to Phosphoserine. Residues 37-64 (IVGSARARPPPDGTPRPQLAAEESPRPR) are disordered. At Thr-69 the chain carries Phosphothreonine. Residues Ser-78, Ser-87, and Ser-96 each carry the phosphoserine modification. A compositionally biased stretch (low complexity) spans 94-121 (VASPRPRTPVGSPWPRVVVGTPRPRVIV). The segment at 94–198 (VASPRPRTPV…GAPDRHRGQI (105 aa)) is disordered. Ser-123 carries the post-translational modification Phosphoserine. Basic and acidic residues predominate over residues 145 to 157 (RRQDEHSGTRAEG). Residues 161–178 (GGAAPVPEEGGRFARAQR) are compositionally biased toward low complexity.

May interact with EIF5A and ERF1. In terms of processing, phosphorylated during M-phase.

It is found in the nucleus. It localises to the nucleolus. The polypeptide is Ras-related protein Rab-34, isoform NARR (RAB34) (Homo sapiens (Human)).